The sequence spans 1150 residues: Solute carrier family 12 member 6 (1150 aa).

A disordered region spans residues 1–108 (MHPPEATTKM…GEHSQLLDDG (108 aa)). The Cytoplasmic portion of the chain corresponds to 1 to 135 (MHPPEATTKM…DEYFDKNLAL (135 aa)). The span at 28 to 45 (LSDTSPDLSSRSSSRVRF) shows a compositional bias: low complexity. Phosphoserine is present on Ser32. The segment covering 80-101 (DRTSNPQDVTEDPSQNSITGEH) has biased composition (polar residues). At Ser120 the chain carries Phosphoserine. A discontinuously helical transmembrane segment spans residues 136–158 (FEEEMDTRPKVSSLLNRMANYTN). K(+) is bound by residues Ser147 and Ser148. A Phosphoserine modification is found at Ser148. Asn151 is a chloride binding site. The Extracellular segment spans residues 159–165 (LTQGAKE). The tract at residues 161 to 181 (QGAKEHEEAENITEGKKKPTK) is disordered. Positions 163–177 (AKEHEEAENITEGKK) are enriched in basic and acidic residues. A helical membrane pass occupies residues 166–188 (HEEAENITEGKKKPTKSPQMGTF). The Cytoplasmic portion of the chain corresponds to 189–211 (MGVYLPCLQNIFGVILFLRLTWV). The chain crosses the membrane as a helical span at residues 212 to 245 (VGTAGILQAFAIVLICCCCTMLTAISMSAIATNG). At 246–263 (VVPAGGSYFMISRALGPE) the chain is on the extracellular side. 2 helical membrane-spanning segments follow: residues 264–287 (FGGAVGLCFYLGTTFAAAMYILGA) and 288–316 (IEIFLVYIVPRAAIFRSDDALKESAAMLN). Tyr283 contributes to the K(+) binding site. Over 317 to 433 (NMRVYGTAFL…FVHNNVISIQ (117 aa)) the chain is Extracellular. Cysteines 375 and 390 form a disulfide. N-linked (GlcNAc...) asparagine glycosylation is found at Asn379, Asn398, Asn411, and Asn417. Cys410 and Cys420 are disulfide-bonded. A helical transmembrane segment spans residues 434–454 (GIPGLASGIITENLWSNYLPK). The K(+) site is built by Ile443, Thr444, and Asn446. Chloride-binding residues include Ile443 and Thr444. Residues Leu447 and Trp448 each coordinate chloride. At 455–464 (GEIIEKPSAK) the chain is on the cytoplasmic side. Residues 465–487 (SSDVLGNLNHEYVLADITTSFTL) form a helical membrane-spanning segment. The Extracellular portion of the chain corresponds to 488–518 (LVGIFFPSVTGIMAGSNRSGDLKDAQKSIPI). Residue Thr497 coordinates K(+). Residues 519 to 545 (GTILAILTTSFVYLSNVVLFGACIEGV) traverse the membrane as a helical segment. Over 546–568 (VLRDKFGDAVKGNLVVGTLSWPS) the chain is Cytoplasmic. The next 2 helical transmembrane spans lie at 569 to 589 (PWVIVIGSFFSTCGAGLQSLT) and 590 to 612 (GAPRLLQAIAKDNIIPFLRVFGH). Ile603 is a chloride binding site. Residues 613-629 (SKANGEPTWALLLTAAI) lie on the Cytoplasmic side of the membrane. 2 helical membrane passes run 630–649 (AELGILIASLDLVAPILSMF) and 650–665 (FLMCYLFVNLACALQT). Residue Tyr654 participates in chloride binding. The Cytoplasmic portion of the chain corresponds to 666–1150 (LLRTPNWRPR…GGSEVITIYS (485 aa)). A scissor helix region spans residues 682 to 691 (ALSFMGMSIC). At Ser736 the chain carries Phosphoserine. Thr778 is subject to Phosphothreonine. The residue at position 981 (Ser981) is a Phosphoserine. A Phosphothreonine modification is found at Thr991. Residues Ser1023, Ser1029, and Ser1032 each carry the phosphoserine modification. At Thr1048 the chain carries Phosphothreonine. Tyr1121 carries the phosphotyrosine modification.

The protein belongs to the SLC12A transporter family. K/Cl co-transporter subfamily. Homodimer; adopts a domain-swap conformation at the scissor helices connecting the transmembrane domain and C-terminal domain. Heterodimer with K-Cl cotransporter SLC12A5. Interacts (via C-terminus) with CKB; the interaction may be required for potassium-chloride cotransport activity. In terms of processing, phosphorylated, phosphorylation regulates transporter activity. Phosphorylated at Thr-991 and Thr-1048 by OXSR1/OSR1 and STK39/SPAK downstream of WNK kinases (WNK1, WNK2, WNK3 or WNK4), inhibiting the potassium-chloride cotransport activity. N-glycosylated. In terms of tissue distribution, expressed in hippocampus and corpus callosum (at protein level). Highly expressed throughout the brain and detected at lower levels in kidney. Highly expressed in highly myelinated white matter of the brain, but not in gray matter. Detected in the corpus callosum, in packed cell layers of the hippocampus and in Purkinje neurons within the cerebellum. Highly expressed in white matter in the spinal cord, but not in dorsal root ganglia or sciatic nerve. Colocalizes with the oligodendrocyte marker CNP. Expressed in hippocampus in CA1, and to a lesser extent CA3 pyramidal cells. Also expressed in cortex, mostly in large neurons and in the large cerebellar Purkinje cells. As to expression, highly expressed in kidney, but not detected in brain.

The protein localises to the cell membrane. The protein resides in the basolateral cell membrane. The catalysed reaction is K(+)(in) + chloride(in) = K(+)(out) + chloride(out). With respect to regulation, inhibited following phosphorylation by OXSR1/OSR1 and STK39/SPAK: phosphorylation takes place downstream of WNK kinases (WNK1, WNK2, WNK3 or WNK4) in response to hyperosmotic stress and subsequent cell shrinkage. Mediates electroneutral potassium-chloride cotransport when activated by cell swelling. May contribute to cell volume homeostasis in single cells. Its function is as follows. Mediates electroneutral potassium-chloride cotransport when activated by cell swelling. May contribute to cell volume homeostasis in single cells. This chain is Solute carrier family 12 member 6 (Slc12a6), found in Mus musculus (Mouse).